A 62-amino-acid chain; its full sequence is Large ribosomal subunit protein bL28 (62 aa).

It belongs to the bacterial ribosomal protein bL28 family.

The polypeptide is Large ribosomal subunit protein bL28 (Helicobacter acinonychis (strain Sheeba)).